A 95-amino-acid chain; its full sequence is Co-chaperonin GroES (95 aa).

Belongs to the GroES chaperonin family. As to quaternary structure, heptamer of 7 subunits arranged in a ring. Interacts with the chaperonin GroEL.

It localises to the cytoplasm. Together with the chaperonin GroEL, plays an essential role in assisting protein folding. The GroEL-GroES system forms a nano-cage that allows encapsulation of the non-native substrate proteins and provides a physical environment optimized to promote and accelerate protein folding. GroES binds to the apical surface of the GroEL ring, thereby capping the opening of the GroEL channel. The protein is Co-chaperonin GroES of Rickettsia felis (strain ATCC VR-1525 / URRWXCal2) (Rickettsia azadi).